The following is a 539-amino-acid chain: Glucans biosynthesis protein D (539 aa).

Positions 1 to 29 (MNRRNLLKASMALAAYGSVSASGLFAARA) form a signal peptide, tat-type signal.

The protein belongs to the OpgD/OpgG family. In terms of processing, predicted to be exported by the Tat system. The position of the signal peptide cleavage has not been experimentally proven.

It is found in the periplasm. It participates in glycan metabolism; osmoregulated periplasmic glucan (OPG) biosynthesis. Its function is as follows. Probably involved in the control of the structural glucose backbone of osmoregulated periplasmic glucans (OPGs). The sequence is that of Glucans biosynthesis protein D from Pseudomonas syringae pv. syringae (strain B728a).